A 457-amino-acid polypeptide reads, in one-letter code: Bifunctional protein GlmU (457 aa).

A pyrophosphorylase region spans residues 1–230; that stretch reads MPLSLPLHIV…AQEVEGVNDL (230 aa). Residues 12–15, Lys26, Gln78, 83–84, 105–107, Gly140, Glu155, Asn170, and Asn228 each bind UDP-N-acetyl-alpha-D-glucosamine; these read LAAG, GT, and YGD. Mg(2+) is bound at residue Asp107. Asn228 serves as a coordination point for Mg(2+). Positions 231-251 are linker; it reads WQLTQLERAWQIRAARALCLQ. Positions 252 to 457 are N-acetyltransferase; it reads GARVADPARL…DGWQRPKKKT (206 aa). UDP-N-acetyl-alpha-D-glucosamine is bound by residues Arg334 and Lys352. His364 acts as the Proton acceptor in catalysis. 2 residues coordinate UDP-N-acetyl-alpha-D-glucosamine: Tyr367 and Asn378. Residues Ala381, 387-388, Ser406, Ala424, and Arg441 contribute to the acetyl-CoA site; that span reads NY.

The protein in the N-terminal section; belongs to the N-acetylglucosamine-1-phosphate uridyltransferase family. This sequence in the C-terminal section; belongs to the transferase hexapeptide repeat family. In terms of assembly, homotrimer. Mg(2+) is required as a cofactor.

Its subcellular location is the cytoplasm. The catalysed reaction is alpha-D-glucosamine 1-phosphate + acetyl-CoA = N-acetyl-alpha-D-glucosamine 1-phosphate + CoA + H(+). It carries out the reaction N-acetyl-alpha-D-glucosamine 1-phosphate + UTP + H(+) = UDP-N-acetyl-alpha-D-glucosamine + diphosphate. It functions in the pathway nucleotide-sugar biosynthesis; UDP-N-acetyl-alpha-D-glucosamine biosynthesis; N-acetyl-alpha-D-glucosamine 1-phosphate from alpha-D-glucosamine 6-phosphate (route II): step 2/2. It participates in nucleotide-sugar biosynthesis; UDP-N-acetyl-alpha-D-glucosamine biosynthesis; UDP-N-acetyl-alpha-D-glucosamine from N-acetyl-alpha-D-glucosamine 1-phosphate: step 1/1. Its pathway is bacterial outer membrane biogenesis; LPS lipid A biosynthesis. In terms of biological role, catalyzes the last two sequential reactions in the de novo biosynthetic pathway for UDP-N-acetylglucosamine (UDP-GlcNAc). The C-terminal domain catalyzes the transfer of acetyl group from acetyl coenzyme A to glucosamine-1-phosphate (GlcN-1-P) to produce N-acetylglucosamine-1-phosphate (GlcNAc-1-P), which is converted into UDP-GlcNAc by the transfer of uridine 5-monophosphate (from uridine 5-triphosphate), a reaction catalyzed by the N-terminal domain. The polypeptide is Bifunctional protein GlmU (Xylella fastidiosa (strain M23)).